A 2097-amino-acid polypeptide reads, in one-letter code: SCAR-like protein 1 (2097 aa).

Disordered stretches follow at residues isoleucine 205–threonine 227, alanine 544–serine 565, serine 1443–serine 1467, serine 1588–lysine 1616, glutamine 1730–valine 1802, alanine 1820–serine 1842, and tyrosine 1893–tyrosine 1944. Positions lysine 549–serine 562 are enriched in low complexity. Positions serine 1443 to asparagine 1454 are enriched in polar residues. Positions serine 1766–alanine 1794 are enriched in polar residues. Residues tyrosine 1908–glutamine 1922 are compositionally biased toward basic and acidic residues. Positions glutamate 2028–valine 2046 constitute a WH2 domain.

It belongs to the SCAR/WAVE family.

The protein resides in the cytoplasm. It localises to the cytoskeleton. Involved in regulation of actin and microtubule organization. Part of a WAVE complex that activates the Arp2/3 complex. This chain is SCAR-like protein 1, found in Oryza sativa subsp. japonica (Rice).